A 269-amino-acid chain; its full sequence is 4-hydroxy-tetrahydrodipicolinate reductase (269 aa).

NAD(+) is bound by residues 11–16 and glutamate 37; that span reads GASGRM. Arginine 38 contacts NADP(+). NAD(+)-binding positions include 101-103 and 125-128; these read GTT and AGNM. Residue histidine 158 is the Proton donor/acceptor of the active site. Histidine 159 contacts (S)-2,3,4,5-tetrahydrodipicolinate. The active-site Proton donor is the lysine 162. 168 to 169 contacts (S)-2,3,4,5-tetrahydrodipicolinate; sequence GT.

It belongs to the DapB family.

The protein resides in the cytoplasm. It catalyses the reaction (S)-2,3,4,5-tetrahydrodipicolinate + NAD(+) + H2O = (2S,4S)-4-hydroxy-2,3,4,5-tetrahydrodipicolinate + NADH + H(+). It carries out the reaction (S)-2,3,4,5-tetrahydrodipicolinate + NADP(+) + H2O = (2S,4S)-4-hydroxy-2,3,4,5-tetrahydrodipicolinate + NADPH + H(+). The protein operates within amino-acid biosynthesis; L-lysine biosynthesis via DAP pathway; (S)-tetrahydrodipicolinate from L-aspartate: step 4/4. In terms of biological role, catalyzes the conversion of 4-hydroxy-tetrahydrodipicolinate (HTPA) to tetrahydrodipicolinate. This is 4-hydroxy-tetrahydrodipicolinate reductase from Cereibacter sphaeroides (strain KD131 / KCTC 12085) (Rhodobacter sphaeroides).